Here is a 66-residue protein sequence, read N- to C-terminus: Large ribosomal subunit protein bL35 (66 aa).

Composition is skewed to basic residues over residues 1–15 and 27–40; these read MPKL…KRFK and AGKR…TKKQ. The interval 1–40 is disordered; the sequence is MPKLKTKSGAKKRFKVTGTGKVMSAHAGKRHGMIKRTKKQ.

The protein belongs to the bacterial ribosomal protein bL35 family.

In Rhodopseudomonas palustris (strain BisA53), this protein is Large ribosomal subunit protein bL35.